A 265-amino-acid polypeptide reads, in one-letter code: Probable autolysin SsaALP (265 aa).

The first 25 residues, 1 to 25, serve as a signal peptide directing secretion; the sequence is MKKLAFAITATSGAAAFLTHHDAQA. LysM domains lie at 27–70 and 89–132; these read TQHT…VISV and SSHT…TLQI. The segment at 72 to 92 is disordered; it reads GSDAQNTSNTSPQAGSASSHT. The segment covering 74–92 has biased composition (polar residues); it reads DAQNTSNTSPQAGSASSHT. Residues 141–265 form the Peptidase C51 domain; the sequence is TPTATTGSNG…SEVSSYAFIH (125 aa).

The enzyme catalyses Hydrolyzes the link between N-acetylmuramoyl residues and L-amino acid residues in certain cell-wall glycopeptides.. In terms of biological role, has weak lytic activity toward S.aureus cells. This Staphylococcus aureus (strain NCTC 8325 / PS 47) protein is Probable autolysin SsaALP.